The chain runs to 162 residues: NADH-quinone oxidoreductase subunit I (162 aa).

4Fe-4S ferredoxin-type domains follow at residues 52 to 82 and 93 to 122; these read LRRY…IEAG and TRYD…EGPN. Residues Cys-62, Cys-65, Cys-68, Cys-72, Cys-102, Cys-105, Cys-108, and Cys-112 each coordinate [4Fe-4S] cluster.

This sequence belongs to the complex I 23 kDa subunit family. NDH-1 is composed of 14 different subunits. Subunits NuoA, H, J, K, L, M, N constitute the membrane sector of the complex. [4Fe-4S] cluster serves as cofactor.

It localises to the cell inner membrane. It catalyses the reaction a quinone + NADH + 5 H(+)(in) = a quinol + NAD(+) + 4 H(+)(out). Its function is as follows. NDH-1 shuttles electrons from NADH, via FMN and iron-sulfur (Fe-S) centers, to quinones in the respiratory chain. The immediate electron acceptor for the enzyme in this species is believed to be ubiquinone. Couples the redox reaction to proton translocation (for every two electrons transferred, four hydrogen ions are translocated across the cytoplasmic membrane), and thus conserves the redox energy in a proton gradient. The protein is NADH-quinone oxidoreductase subunit I of Beijerinckia indica subsp. indica (strain ATCC 9039 / DSM 1715 / NCIMB 8712).